A 486-amino-acid chain; its full sequence is Cardiolipin synthase A (486 aa).

The next 2 membrane-spanning stretches (helical) occupy residues 3-23 (TFYTVMSWLLVFGYWLLIAGV) and 38-58 (MAWLLIIYILPLVGIIAYLSL). 2 PLD phosphodiesterase domains span residues 219–246 (MDLRQHRKVVLIDNYIAYTGSMNLVDPR) and 399–426 (EGGLLHSKSILVDGQLSLVGTVNLDMRS). Active-site residues include His224, Lys226, Asp231, His404, Lys406, and Asp411.

This sequence belongs to the phospholipase D family. Cardiolipin synthase subfamily. ClsA sub-subfamily.

It localises to the cell inner membrane. The catalysed reaction is 2 a 1,2-diacyl-sn-glycero-3-phospho-(1'-sn-glycerol) = a cardiolipin + glycerol. In terms of biological role, catalyzes the reversible phosphatidyl group transfer from one phosphatidylglycerol molecule to another to form cardiolipin (CL) (diphosphatidylglycerol) and glycerol. In Erwinia tasmaniensis (strain DSM 17950 / CFBP 7177 / CIP 109463 / NCPPB 4357 / Et1/99), this protein is Cardiolipin synthase A.